The following is a 1037-amino-acid chain: Caspase recruitment domain-containing protein 6 (1037 aa).

An N-acetylalanine modification is found at Ala-2. Positions 3–94 (TESTPSEIIE…QSAAICGLRH (92 aa)) constitute a CARD domain. A Phosphoserine modification is found at Ser-154. Disordered stretches follow at residues 235–270 (DPEHVGYDGEEDFENSETTEFSGEEPSYEGSETSLS), 669–704 (VSSGENMAGTAEGEGQQRHSQLKSSSKSQALMPIQE), and 887–1037 (RTSH…GGKH). Residues 242-261 (DGEEDFENSETTEFSGEEPS) are compositionally biased toward acidic residues. The span at 690-699 (LKSSSKSQAL) shows a compositional bias: low complexity. Composition is skewed to polar residues over residues 911-928 (ASQQGVQMKTQGGASNPA), 938-954 (KSSQFKSDQSNPSTVKH), and 963-984 (VPSQPKSSQTKSCQSQPSQTKP). Residue Ser-985 is modified to Phosphoserine. Pro residues predominate over residues 994-1012 (PSQPWPPQSKPSQPRPPQP). The span at 1023-1037 (KAHHSKAGQKRGGKH) shows a compositional bias: basic residues.

Functionally, may be involved in apoptosis. The polypeptide is Caspase recruitment domain-containing protein 6 (CARD6) (Homo sapiens (Human)).